A 198-amino-acid chain; its full sequence is Recombination protein RecR (198 aa).

The C4-type zinc-finger motif lies at 57-72 (CSVCGHITDTDPCYIC). The Toprim domain occupies 80–175 (SMICVVEETK…KVTRLAHGLP (96 aa)).

It belongs to the RecR family.

Functionally, may play a role in DNA repair. It seems to be involved in an RecBC-independent recombinational process of DNA repair. It may act with RecF and RecO. This is Recombination protein RecR from Macrococcus caseolyticus (strain JCSC5402) (Macrococcoides caseolyticum).